A 275-amino-acid polypeptide reads, in one-letter code: Methylthioribulose-1-phosphate dehydratase (275 aa).

Cys125 provides a ligand contact to substrate. Zn(2+)-binding residues include His143 and His145. The active-site Proton donor/acceptor is Glu168. His233 lines the Zn(2+) pocket.

Belongs to the aldolase class II family. MtnB subfamily. It depends on Zn(2+) as a cofactor.

It localises to the cytoplasm. It catalyses the reaction 5-(methylsulfanyl)-D-ribulose 1-phosphate = 5-methylsulfanyl-2,3-dioxopentyl phosphate + H2O. The protein operates within amino-acid biosynthesis; L-methionine biosynthesis via salvage pathway; L-methionine from S-methyl-5-thio-alpha-D-ribose 1-phosphate: step 2/6. Its function is as follows. Catalyzes the dehydration of methylthioribulose-1-phosphate (MTRu-1-P) into 2,3-diketo-5-methylthiopentyl-1-phosphate (DK-MTP-1-P). This is Methylthioribulose-1-phosphate dehydratase from Lodderomyces elongisporus (strain ATCC 11503 / CBS 2605 / JCM 1781 / NBRC 1676 / NRRL YB-4239) (Yeast).